The following is a 252-amino-acid chain: tRNA (guanine-N(1)-)-methyltransferase (252 aa).

Residues G117 and 137 to 142 (IGDYVL) contribute to the S-adenosyl-L-methionine site.

This sequence belongs to the RNA methyltransferase TrmD family. In terms of assembly, homodimer.

It localises to the cytoplasm. The catalysed reaction is guanosine(37) in tRNA + S-adenosyl-L-methionine = N(1)-methylguanosine(37) in tRNA + S-adenosyl-L-homocysteine + H(+). Its function is as follows. Specifically methylates guanosine-37 in various tRNAs. This Idiomarina loihiensis (strain ATCC BAA-735 / DSM 15497 / L2-TR) protein is tRNA (guanine-N(1)-)-methyltransferase.